The sequence spans 312 residues: 4-hydroxy-3-methylbut-2-enyl diphosphate reductase (312 aa).

Cysteine 15 provides a ligand contact to [4Fe-4S] cluster. The (2E)-4-hydroxy-3-methylbut-2-enyl diphosphate site is built by histidine 44 and histidine 77. The dimethylallyl diphosphate site is built by histidine 44 and histidine 77. 2 residues coordinate isopentenyl diphosphate: histidine 44 and histidine 77. Cysteine 99 contributes to the [4Fe-4S] cluster binding site. Histidine 127 lines the (2E)-4-hydroxy-3-methylbut-2-enyl diphosphate pocket. Residue histidine 127 participates in dimethylallyl diphosphate binding. Histidine 127 is a binding site for isopentenyl diphosphate. Residue glutamate 129 is the Proton donor of the active site. A (2E)-4-hydroxy-3-methylbut-2-enyl diphosphate-binding site is contributed by threonine 167. Cysteine 197 lines the [4Fe-4S] cluster pocket. The (2E)-4-hydroxy-3-methylbut-2-enyl diphosphate site is built by serine 225, serine 226, asparagine 227, and serine 269. Dimethylallyl diphosphate contacts are provided by serine 225, serine 226, asparagine 227, and serine 269. Isopentenyl diphosphate-binding residues include serine 225, serine 226, asparagine 227, and serine 269.

Belongs to the IspH family. Requires [4Fe-4S] cluster as cofactor.

It carries out the reaction isopentenyl diphosphate + 2 oxidized [2Fe-2S]-[ferredoxin] + H2O = (2E)-4-hydroxy-3-methylbut-2-enyl diphosphate + 2 reduced [2Fe-2S]-[ferredoxin] + 2 H(+). It catalyses the reaction dimethylallyl diphosphate + 2 oxidized [2Fe-2S]-[ferredoxin] + H2O = (2E)-4-hydroxy-3-methylbut-2-enyl diphosphate + 2 reduced [2Fe-2S]-[ferredoxin] + 2 H(+). It participates in isoprenoid biosynthesis; dimethylallyl diphosphate biosynthesis; dimethylallyl diphosphate from (2E)-4-hydroxy-3-methylbutenyl diphosphate: step 1/1. Its pathway is isoprenoid biosynthesis; isopentenyl diphosphate biosynthesis via DXP pathway; isopentenyl diphosphate from 1-deoxy-D-xylulose 5-phosphate: step 6/6. Its function is as follows. Catalyzes the conversion of 1-hydroxy-2-methyl-2-(E)-butenyl 4-diphosphate (HMBPP) into a mixture of isopentenyl diphosphate (IPP) and dimethylallyl diphosphate (DMAPP). Acts in the terminal step of the DOXP/MEP pathway for isoprenoid precursor biosynthesis. This Aromatoleum aromaticum (strain DSM 19018 / LMG 30748 / EbN1) (Azoarcus sp. (strain EbN1)) protein is 4-hydroxy-3-methylbut-2-enyl diphosphate reductase.